The following is a 469-amino-acid chain: MCDLIEPQPAEKIGKMKKLRRTLSESFSRIALKKEDTTFDEICVTKMSTRNCQGTDSVIKHLDTIPEDKKVRVQRTQSTFDPFEKPANQVKRVHSENNACINFKSSSAGKESPKVRRHSSPSSPTSPKFGKADSYEKLEKLGEGSYATVYKGKSKVNGKLVALKVIRLQEEEGTPFTAIREASLLKGLKHANIVLLHDIIHTKETLTLVFEYVHTDLCQYMDKHPGGLHPDNVKLFLFQLLRGLSYIHQRYILHRDLKPQNLLISDTGELKLADFGLARAKSVPSHTYSNEVVTLWYRPPDVLLGSTEYSTCLDMWGVGCIFVEMIQGVAAFPGMKDIQDQLERIFLVLGTPNEDTWPGVHSLPHFKPERFTVYSSKSLRQAWNKLSYVNHAEDLASKLLQCSPKNRLSAQAALSHEYFSDLPPRLWELTDMSSIFTVPNVRLQPEAGESMRAFGKNNSYGKSLSNSKH.

Ser24, Ser78, and Ser95 each carry phosphoserine. Residues Phe103 to Asp133 form a disordered region. Position 134 is a phosphoserine (Ser134). One can recognise a Protein kinase domain in the interval Tyr135–Phe419. ATP-binding positions include Leu141–Val149 and Lys164. Residue Asp256 is the Proton acceptor of the active site. Residues Glu449 to His469 form a disordered region. A compositionally biased stretch (polar residues) spans Lys456–His469.

The protein belongs to the protein kinase superfamily. CMGC Ser/Thr protein kinase family. CDC2/CDKX subfamily. In terms of assembly, found in a complex with LRP6, CCNY and CAPRIN2 during G2/M stage; CAPRIN2 functions as a scaffold for the complex by binding to CCNY via its N terminus and to CDK14 via its C terminus. Interacts with CCNY; CCNY mediates its recruitment to the plasma membrane and promotes phosphorylation of LRP6. Interacts with CCDN3 and CDKN1A. Interacts with SEPT8. Interacts with 14-3-3 proteina YWHAB, YWHAE, YWHAH and YWHAQ. In the adult, widely expressed at low levels except in brain, kidney and testis where expression is high. In the brain, detected in cortex, hippocampus, dentate gyrus, amygdala cortex, parasubiculum and cerebellum. In the embryo, expressed predominantly in the nervous system.

The protein resides in the cell membrane. It is found in the cytoplasm. Its subcellular location is the nucleus. It catalyses the reaction L-seryl-[protein] + ATP = O-phospho-L-seryl-[protein] + ADP + H(+). The catalysed reaction is L-threonyl-[protein] + ATP = O-phospho-L-threonyl-[protein] + ADP + H(+). Serine/threonine-protein kinase activity is promoted by associated cyclins CCDN3 and CCNY and repressed by CDKN1A. In terms of biological role, serine/threonine-protein kinase involved in the control of the eukaryotic cell cycle, whose activity is controlled by an associated cyclin. Acts as a cell-cycle regulator of Wnt signaling pathway during G2/M phase by mediating the phosphorylation of LRP6 at 'Ser-1490', leading to the activation of the Wnt signaling pathway. Acts as a regulator of cell cycle progression and cell proliferation via its interaction with CCDN3. Phosphorylates RB1 in vitro, however the relevance of such result remains to be confirmed in vivo. May also play a role in meiosis, neuron differentiation and may indirectly act as a negative regulator of insulin-responsive glucose transport. The chain is Cyclin-dependent kinase 14 (Cdk14) from Mus musculus (Mouse).